A 224-amino-acid chain; its full sequence is Adenylate kinase (224 aa).

Residue 10–15 (GSGKGT) participates in ATP binding. The tract at residues 30–59 (ESGAIFRDNIKGGTDLGMKAKAYIDKGDLV) is NMP. Residues Ser31, Arg36, 57–59 (DLV), 85–88 (GFPR), and Gln92 each bind AMP. An LID region spans residues 126–165 (GRRLCENDNNHPNNIFIDAIKPNGDKCRVCGGALSSRADD). Residue Arg127 coordinates ATP. Residues Arg162 and Arg174 each coordinate AMP. An ATP-binding site is contributed by Asn211.

This sequence belongs to the adenylate kinase family. In terms of assembly, monomer.

The protein resides in the cytoplasm. The catalysed reaction is AMP + ATP = 2 ADP. Its pathway is purine metabolism; AMP biosynthesis via salvage pathway; AMP from ADP: step 1/1. Functionally, catalyzes the reversible transfer of the terminal phosphate group between ATP and AMP. Plays an important role in cellular energy homeostasis and in adenine nucleotide metabolism. This is Adenylate kinase from Desulforapulum autotrophicum (strain ATCC 43914 / DSM 3382 / VKM B-1955 / HRM2) (Desulfobacterium autotrophicum).